The sequence spans 296 residues: Protease HtpX homolog (296 aa).

A run of 2 helical transmembrane segments spans residues 14-34 and 39-59; these read VVLL…VGYL and YQFG…SMIF. H143 lines the Zn(2+) pocket. Residue E144 is part of the active site. H147 contributes to the Zn(2+) binding site. 2 consecutive transmembrane segments (helical) span residues 158–178 and 195–215; these read IAVA…RMLF and ILVL…ASLV. E224 is a Zn(2+) binding site.

This sequence belongs to the peptidase M48B family. Zn(2+) serves as cofactor.

The protein localises to the cell membrane. In Streptococcus agalactiae serotype Ia (strain ATCC 27591 / A909 / CDC SS700), this protein is Protease HtpX homolog.